A 272-amino-acid chain; its full sequence is uncharacterized protein (272 aa).

2 helical membrane-spanning segments follow: residues Gly9–His29 and Ser252–Ile272.

The protein localises to the membrane. This is an uncharacterized protein from Caenorhabditis elegans.